The chain runs to 89 residues: Small ribosomal subunit protein uS15 (89 aa).

This sequence belongs to the universal ribosomal protein uS15 family. As to quaternary structure, part of the 30S ribosomal subunit. Forms a bridge to the 50S subunit in the 70S ribosome, contacting the 23S rRNA.

In terms of biological role, one of the primary rRNA binding proteins, it binds directly to 16S rRNA where it helps nucleate assembly of the platform of the 30S subunit by binding and bridging several RNA helices of the 16S rRNA. Functionally, forms an intersubunit bridge (bridge B4) with the 23S rRNA of the 50S subunit in the ribosome. The protein is Small ribosomal subunit protein uS15 of Mycobacterium sp. (strain JLS).